We begin with the raw amino-acid sequence, 357 residues long: Acidic fibroblast growth factor intracellular-binding protein (357 aa).

N-acetylthreonine is present on Thr2.

As to quaternary structure, binds to internalized FGF1; this interaction is increased in the presence of CSNKB, suggesting a possible cooperative interaction between CSNKB and FIBP in binding to FGF1.

The protein resides in the nucleus. The protein localises to the endomembrane system. In terms of biological role, may be involved in mitogenic function of FGF1. May mediate with IER2 FGF-signaling in the establishment of laterality in the embryo. This chain is Acidic fibroblast growth factor intracellular-binding protein (FIBP), found in Chlorocebus aethiops (Green monkey).